Consider the following 311-residue polypeptide: uncharacterized protein (311 aa).

Residues 1–13 form the signal peptide; that stretch reads MLLSLIFPIAVLG. N-linked (GlcNAc...) asparagine glycosylation occurs at Asn115.

The protein resides in the secreted. This is an uncharacterized protein from Encephalitozoon cuniculi (strain GB-M1) (Microsporidian parasite).